Reading from the N-terminus, the 312-residue chain is MGISNFASICSRTPLPLCSVIKSTTHLVLSNSTKIHDFDPQHLNIGILPKCYARSIDIANTTIFGIGNAFINIAALGVILIILYNIRQKYTAIGRSEYLYFFQLTLLLIIFTLIVNCGVSPPGSNSFPYFVAVQIGLAGACCWTLLINGFLGFNLWEDGTTKSMLLVRGFSLCGFMANFLASILTFRTWIENHEIPNTNTTALFVVVYLWNLINLFIFVICQLFVSFFIVRNLWVTGAVLLGVFFFVAGQILTYGFSSQICEGVKHYLDGLFFGSICNIFTLMMVYKTWDITTDDDLEFSVSIDKNGDVLYN.

The next 7 helical transmembrane spans lie at 63-83, 99-119, 127-147, 164-184, 201-221, 233-253, and 266-286; these read IFGI…LIIL, LYFF…NCGV, FPYF…TLLI, MLLV…ASIL, TALF…FVIC, LWVT…QILT, and HYLD…MMVY.

The protein belongs to the CHS7 family. In terms of assembly, interacts with CHS3.

Its subcellular location is the endoplasmic reticulum membrane. Chaperone required for the export of the chitin synthase CHS3 from the endoplasmic reticulum. This is Chitin synthase export chaperone (CHS7) from Candida glabrata (strain ATCC 2001 / BCRC 20586 / JCM 3761 / NBRC 0622 / NRRL Y-65 / CBS 138) (Yeast).